The primary structure comprises 172 residues: Adenine phosphoribosyltransferase (172 aa).

The protein belongs to the purine/pyrimidine phosphoribosyltransferase family. In terms of assembly, homodimer.

The protein resides in the cytoplasm. The enzyme catalyses AMP + diphosphate = 5-phospho-alpha-D-ribose 1-diphosphate + adenine. The protein operates within purine metabolism; AMP biosynthesis via salvage pathway; AMP from adenine: step 1/1. Functionally, catalyzes a salvage reaction resulting in the formation of AMP, that is energically less costly than de novo synthesis. This is Adenine phosphoribosyltransferase from Alkaliphilus oremlandii (strain OhILAs) (Clostridium oremlandii (strain OhILAs)).